We begin with the raw amino-acid sequence, 677 residues long: DNA-directed RNA polymerase subunit beta' (677 aa).

Zn(2+) is bound by residues Cys69, Cys71, Cys87, and Cys90. 3 residues coordinate Mg(2+): Asp489, Asp491, and Asp493.

This sequence belongs to the RNA polymerase beta' chain family. RpoC1 subfamily. In plastids the minimal PEP RNA polymerase catalytic core is composed of four subunits: alpha, beta, beta', and beta''. When a (nuclear-encoded) sigma factor is associated with the core the holoenzyme is formed, which can initiate transcription. It depends on Mg(2+) as a cofactor. The cofactor is Zn(2+).

The protein localises to the plastid. It is found in the chloroplast. It catalyses the reaction RNA(n) + a ribonucleoside 5'-triphosphate = RNA(n+1) + diphosphate. Its function is as follows. DNA-dependent RNA polymerase catalyzes the transcription of DNA into RNA using the four ribonucleoside triphosphates as substrates. The chain is DNA-directed RNA polymerase subunit beta' from Daucus carota (Wild carrot).